Here is a 1113-residue protein sequence, read N- to C-terminus: Myosin-binding protein 1 (1113 aa).

Residues 12-34 (LAFNEWLLMFMLFVNSIFSYVIA) form a helical membrane-spanning segment. The interval 209–229 (ESEAVFSDTEPKQESSLNHLP) is disordered. The GTD-binding domain occupies 888-986 (SEGDRLKRQV…DLEAEIEYFR (99 aa)).

In terms of assembly, interacts with myosin XI-K, XI-I and XI-1. As to expression, expressed in leaf epidermal cells, roots and root hairs.

It localises to the endomembrane system. Membrane-anchored myosin receptors that define a distinct, plant-specific transport vesicle compartment. In Arabidopsis thaliana (Mouse-ear cress), this protein is Myosin-binding protein 1.